A 126-amino-acid polypeptide reads, in one-letter code: Small ribosomal subunit protein uS13c (126 aa).

Residues 95 to 126 (GLPLRGQNTRTNARTKRGIKKTMAGKKKAPRK) form a disordered region. Over residues 107–126 (ARTKRGIKKTMAGKKKAPRK) the composition is skewed to basic residues.

It belongs to the universal ribosomal protein uS13 family. In terms of assembly, part of the 30S ribosomal subunit.

The protein localises to the plastid. It localises to the chloroplast. Located at the top of the head of the 30S subunit, it contacts several helices of the 16S rRNA. The sequence is that of Small ribosomal subunit protein uS13c from Gracilaria tenuistipitata var. liui (Red alga).